Reading from the N-terminus, the 402-residue chain is S-adenosylmethionine synthase (402 aa).

Residue histidine 16 coordinates ATP. Aspartate 18 contributes to the Mg(2+) binding site. Glutamate 44 is a binding site for K(+). The L-methionine site is built by glutamate 57 and glutamine 103. Residues 103–113 (QSPDIAQGVDT) form a flexible loop region. Residues 178-180 (DGK), 249-250 (KF), aspartate 258, 264-265 (RK), alanine 281, and lysine 285 contribute to the ATP site. Aspartate 258 contacts L-methionine. Lysine 289 is a binding site for L-methionine.

Belongs to the AdoMet synthase family. As to quaternary structure, homotetramer; dimer of dimers. Mg(2+) is required as a cofactor. Requires K(+) as cofactor.

It localises to the cytoplasm. It carries out the reaction L-methionine + ATP + H2O = S-adenosyl-L-methionine + phosphate + diphosphate. Its pathway is amino-acid biosynthesis; S-adenosyl-L-methionine biosynthesis; S-adenosyl-L-methionine from L-methionine: step 1/1. Its function is as follows. Catalyzes the formation of S-adenosylmethionine (AdoMet) from methionine and ATP. The overall synthetic reaction is composed of two sequential steps, AdoMet formation and the subsequent tripolyphosphate hydrolysis which occurs prior to release of AdoMet from the enzyme. This chain is S-adenosylmethionine synthase, found in Mycolicibacterium vanbaalenii (strain DSM 7251 / JCM 13017 / BCRC 16820 / KCTC 9966 / NRRL B-24157 / PYR-1) (Mycobacterium vanbaalenii).